A 316-amino-acid chain; its full sequence is Mitochondrial distribution and morphology protein 12 (316 aa).

Positions 1–312 (MSIDLEWNGL…FPNFHTLVLG (312 aa)) constitute an SMP-LTD domain.

The protein belongs to the MDM12 family. As to quaternary structure, component of the ER-mitochondria encounter structure (ERMES) or MDM complex, composed of MMM1, MDM10, MDM12 and MDM34. An MMM1 homodimer associates with one molecule of MDM12 on each side in a pairwise head-to-tail manner, and the SMP-LTD domains of MMM1 and MDM12 generate a continuous hydrophobic tunnel for phospholipid trafficking.

The protein localises to the mitochondrion outer membrane. The protein resides in the endoplasmic reticulum membrane. Its function is as follows. Component of the ERMES/MDM complex, which serves as a molecular tether to connect the endoplasmic reticulum (ER) and mitochondria. Components of this complex are involved in the control of mitochondrial shape and protein biogenesis, and function in nonvesicular lipid trafficking between the ER and mitochondria. MDM12 is required for the interaction of the ER-resident membrane protein MMM1 and the outer mitochondrial membrane-resident beta-barrel protein MDM10. The MDM12-MMM1 subcomplex functions in the major beta-barrel assembly pathway that is responsible for biogenesis of all mitochondrial outer membrane beta-barrel proteins, and acts in a late step after the SAM complex. The MDM10-MDM12-MMM1 subcomplex further acts in the TOM40-specific pathway after the action of the MDM12-MMM1 complex. Essential for establishing and maintaining the structure of mitochondria and maintenance of mtDNA nucleoids. In Postia placenta (strain ATCC 44394 / Madison 698-R) (Brown rot fungus), this protein is Mitochondrial distribution and morphology protein 12.